Reading from the N-terminus, the 512-residue chain is Glutamyl-tRNA(Gln) amidotransferase subunit A (512 aa).

Active-site charge relay system residues include Lys-82 and Ser-157. The Acyl-ester intermediate role is filled by Ser-181.

The protein belongs to the amidase family. GatA subfamily. As to quaternary structure, heterotrimer of A, B and C subunits.

The enzyme catalyses L-glutamyl-tRNA(Gln) + L-glutamine + ATP + H2O = L-glutaminyl-tRNA(Gln) + L-glutamate + ADP + phosphate + H(+). In terms of biological role, allows the formation of correctly charged Gln-tRNA(Gln) through the transamidation of misacylated Glu-tRNA(Gln) in organisms which lack glutaminyl-tRNA synthetase. The reaction takes place in the presence of glutamine and ATP through an activated gamma-phospho-Glu-tRNA(Gln). In Bordetella pertussis (strain Tohama I / ATCC BAA-589 / NCTC 13251), this protein is Glutamyl-tRNA(Gln) amidotransferase subunit A.